A 422-amino-acid chain; its full sequence is Ubiquitin-conjugating enzyme E2 Q1 (422 aa).

N-acetylmethionine is present on Met-1. A compositionally biased stretch (low complexity) spans 1-24 (MQQPQPQGQQQPGPGQQLGVQGAA). Disordered stretches follow at residues 1-40 (MQQP…PGPC) and 173-221 (QPLP…EDDG). A compositionally biased stretch (gly residues) spans 25-35 (PGAGGGPGGGP). The span at 185–200 (VSSEDEDEEMPEDTED) shows a compositional bias: acidic residues. Basic and acidic residues predominate over residues 212-221 (AEGKKSEDDG). One can recognise a UBC core domain in the interval 251–415 (QATDRLMKEL…VQIHEKNGWY (165 aa)). Cys-351 acts as the Glycyl thioester intermediate in catalysis.

The protein belongs to the ubiquitin-conjugating enzyme family. Monomer and homodimer. Only the homodimer is linked to ubiquitin through thiolester activation. Interacts (via N-terminus) with B4GALT1 (via N-terminal cytoplasmic domain); the interaction is direct. Autoubiquitinated in vitro in the presence of NEDD4L. Expressed in liver, brain, heart, spleen, lung, kidney, muscle, ovary, epididymis, testis and placenta. Also expressed in thymus and ES cells. Only expressed in the uterus during pregnancy. Expressed in oocytes and during subsequent embryonic development stages (4-cell stage, blastocyst, 8.5 dpc, 13.5 dpc, 16.5 dpc and 18.5 dpc).

The protein localises to the nucleus. Its subcellular location is the cell projection. The protein resides in the filopodium. It is found in the cytoplasm. It localises to the cytosol. The enzyme catalyses S-ubiquitinyl-[E1 ubiquitin-activating enzyme]-L-cysteine + [E2 ubiquitin-conjugating enzyme]-L-cysteine = [E1 ubiquitin-activating enzyme]-L-cysteine + S-ubiquitinyl-[E2 ubiquitin-conjugating enzyme]-L-cysteine.. It functions in the pathway protein modification; protein ubiquitination. Its function is as follows. Catalyzes the covalent attachment of ubiquitin to other proteins. Involved in female fertility and embryo implantation. May be involved in hormonal homeostasis in females. Involved in regulation of B4GALT1 cell surface expression, B4GALT1-mediated cell adhesion to laminin and embryoid body formation. This is Ubiquitin-conjugating enzyme E2 Q1 (Ube2q1) from Mus musculus (Mouse).